The primary structure comprises 588 residues: MIQHPRIGIRPTIDGRRQGVRESLEVQTMNMAKSVADLISSTLKYPDGEPVECVISPSTIGRVPEAAASHELFKKSNVCATITVTPCWCYGSETMDMSPDIPHAIWGFNGTERPGAVYLAAVLASHAQKGIPAFGIYGRDVQEANDTDIPEDVKEKLLRYARAALATGLMRDTAYLSMGSVSMGIGGSIVNPDFFQEYLGMRNESVDMTEFTRRMDRGIYDPEEFERAMVWVKEHIKEGVDRNREDLILSKEEKEKQWEFVIKMFMIGRDLMVGNPRLAELGFEEEAVGHHALVAGFQGQRQWTDHFPNGDFMETFLNTQFDWNGIRKPFVFATENDSLNGVSMLFNYLLTNTPQIFADVRTYWSPEAVERVTGYTLEGRAAAGFLHLINSGSCTLDGTGQATRDGKPVMKPFWELDESEVQAMLENTDFPPANREYFRGGGFSTRFLTKGDMPVTMVRLNLLKGVGPVLQIAEGYTLELPEDVHHTLDNRTDPGWPTTWFAPRLTGKGAFKSVYDVMNNWGANHGAITYGHIGADLITLASMLRIPVNMHNVPEEDIFRPKNWSLFGTEDLESADYRACQLLGPLHK.

Residues glutamate 335 and aspartate 359 each act as proton acceptor in the active site. Glutamate 335, aspartate 359, and histidine 525 together coordinate Mn(2+).

The protein belongs to the L-fucose isomerase family. Requires Mn(2+) as cofactor.

The protein resides in the cytoplasm. It catalyses the reaction L-fucose = L-fuculose. It participates in carbohydrate degradation; L-fucose degradation; L-lactaldehyde and glycerone phosphate from L-fucose: step 1/3. Its function is as follows. Converts the aldose L-fucose into the corresponding ketose L-fuculose. The polypeptide is L-fucose isomerase (Streptococcus pneumoniae (strain ATCC 700669 / Spain 23F-1)).